Consider the following 326-residue polypeptide: Heat-inducible transcription repressor HrcA (326 aa).

It belongs to the HrcA family.

Functionally, negative regulator of class I heat shock genes (grpE-dnaK-dnaJ and groELS operons). Prevents heat-shock induction of these operons. The protein is Heat-inducible transcription repressor HrcA of Staphylococcus saprophyticus subsp. saprophyticus (strain ATCC 15305 / DSM 20229 / NCIMB 8711 / NCTC 7292 / S-41).